The sequence spans 514 residues: DNA-(apurinic or apyrimidinic site) endonuclease 2 (514 aa).

The Mg(2+) site is built by Asn-8 and Glu-48. Residue Tyr-156 is part of the active site. The Mg(2+) site is built by Asp-197, Asn-199, Asp-303, and His-304. Asp-197 functions as the Proton donor/acceptor in the catalytic mechanism. Catalysis depends on His-304, which acts as the Proton acceptor. Positions 359–417 (PSNQTQVHMRKNKARVRSTRSRPSKTGSSRGQKNLMSYFQPSSSGPQTSNLDLPSLGTL) are disordered. A compositionally biased stretch (basic residues) spans 366-381 (HMRKNKARVRSTRSRP). Lys-371 is covalently cross-linked (Glycyl lysine isopeptide (Lys-Gly) (interchain with G-Cter in ubiquitin)). Residues 382–410 (SKTGSSRGQKNLMSYFQPSSSGPQTSNLD) show a composition bias toward polar residues. Positions 390–397 (QKNLMSYF) are required for the interaction and colocalization with PCNA in nuclear foci in presence of oxidative-induced DNA damaging agents. Zn(2+) contacts are provided by Cys-465, His-468, Cys-491, and Cys-505. The GRF-type zinc-finger motif lies at 465 to 514 (CGGHREPCVMRTVKKPGPNLGRHFYMCARPQGPPTDPSSRCNFFLWSRPS).

This sequence belongs to the DNA repair enzymes AP/ExoA family. As to quaternary structure, interacts with PCNA; this interaction is triggered by reactive oxygen species and increased by misincorporation of uracil in nuclear DNA. It depends on Mg(2+) as a cofactor. Requires Mn(2+) as cofactor. In terms of processing, ubiquitinated by the CUL9-RBX1 complex. Ubiquitinated by MKRN3 at Lys-371 leading to proteasomal degradation.

It is found in the nucleus. The protein resides in the cytoplasm. The protein localises to the mitochondrion. The catalysed reaction is Exonucleolytic cleavage in the 3'- to 5'-direction to yield nucleoside 5'-phosphates.. 3'-5' exonuclease activity is activated by sodium and manganese. 3'-5' exonuclease and 3'-phosphodiesterase activities are stimulated in presence of PCNA. Functions as a weak apurinic/apyrimidinic (AP) endodeoxyribonuclease in the DNA base excision repair (BER) pathway of DNA lesions induced by oxidative and alkylating agents. Initiates repair of AP sites in DNA by catalyzing hydrolytic incision of the phosphodiester backbone immediately adjacent to the damage, generating a single-strand break with 5'-deoxyribose phosphate and 3'-hydroxyl ends. Also displays double-stranded DNA 3'-5' exonuclease, 3'-phosphodiesterase activities. Shows robust 3'-5' exonuclease activity on 3'-recessed heteroduplex DNA and is able to remove mismatched nucleotides preferentially. Shows fairly strong 3'-phosphodiesterase activity involved in the removal of 3'-damaged termini formed in DNA by oxidative agents. In the nucleus functions in the PCNA-dependent BER pathway. Plays a role in reversing blocked 3' DNA ends, problematic lesions that preclude DNA synthesis. Required for somatic hypermutation (SHM) and DNA cleavage step of class switch recombination (CSR) of immunoglobulin genes. Required for proper cell cycle progression during proliferation of peripheral lymphocytes. This Bos taurus (Bovine) protein is DNA-(apurinic or apyrimidinic site) endonuclease 2 (APEX2).